A 308-amino-acid polypeptide reads, in one-letter code: Homoserine kinase (308 aa).

95-105 serves as a coordination point for ATP; sequence PQSRGLGSSAA.

It belongs to the GHMP kinase family. Homoserine kinase subfamily.

The protein localises to the cytoplasm. The enzyme catalyses L-homoserine + ATP = O-phospho-L-homoserine + ADP + H(+). It participates in amino-acid biosynthesis; L-threonine biosynthesis; L-threonine from L-aspartate: step 4/5. Catalyzes the ATP-dependent phosphorylation of L-homoserine to L-homoserine phosphate. This Corynebacterium diphtheriae (strain ATCC 700971 / NCTC 13129 / Biotype gravis) protein is Homoserine kinase.